We begin with the raw amino-acid sequence, 119 residues long: Large ribosomal subunit protein bL12 (119 aa).

Belongs to the bacterial ribosomal protein bL12 family. Homodimer. Part of the ribosomal stalk of the 50S ribosomal subunit. Forms a multimeric L10(L12)X complex, where L10 forms an elongated spine to which 2 to 4 L12 dimers bind in a sequential fashion. Binds GTP-bound translation factors.

Functionally, forms part of the ribosomal stalk which helps the ribosome interact with GTP-bound translation factors. Is thus essential for accurate translation. This chain is Large ribosomal subunit protein bL12, found in Lysinibacillus sphaericus (strain C3-41).